The following is a 472-amino-acid chain: 3-isopropylmalate dehydratase large subunit (472 aa).

Cysteine 350, cysteine 411, and cysteine 414 together coordinate [4Fe-4S] cluster.

The protein belongs to the aconitase/IPM isomerase family. LeuC type 1 subfamily. In terms of assembly, heterodimer of LeuC and LeuD. Requires [4Fe-4S] cluster as cofactor.

The enzyme catalyses (2R,3S)-3-isopropylmalate = (2S)-2-isopropylmalate. Its pathway is amino-acid biosynthesis; L-leucine biosynthesis; L-leucine from 3-methyl-2-oxobutanoate: step 2/4. Functionally, catalyzes the isomerization between 2-isopropylmalate and 3-isopropylmalate, via the formation of 2-isopropylmaleate. The chain is 3-isopropylmalate dehydratase large subunit from Alcanivorax borkumensis (strain ATCC 700651 / DSM 11573 / NCIMB 13689 / SK2).